The chain runs to 65 residues: Large ribosomal subunit protein bL35 (65 aa).

The protein belongs to the bacterial ribosomal protein bL35 family.

In Buchnera aphidicola subsp. Cinara cedri (strain Cc), this protein is Large ribosomal subunit protein bL35.